Reading from the N-terminus, the 220-residue chain is Thiamine-phosphate synthase (220 aa).

4-amino-2-methyl-5-(diphosphooxymethyl)pyrimidine contacts are provided by residues 38–42 (QYRDK) and N70. Positions 71 and 90 each coordinate Mg(2+). Residue T109 coordinates 4-amino-2-methyl-5-(diphosphooxymethyl)pyrimidine. 135–137 (TVS) provides a ligand contact to 2-[(2R,5Z)-2-carboxy-4-methylthiazol-5(2H)-ylidene]ethyl phosphate. K138 serves as a coordination point for 4-amino-2-methyl-5-(diphosphooxymethyl)pyrimidine. Residues G171 and 191–192 (IS) each bind 2-[(2R,5Z)-2-carboxy-4-methylthiazol-5(2H)-ylidene]ethyl phosphate.

This sequence belongs to the thiamine-phosphate synthase family. Mg(2+) is required as a cofactor.

It catalyses the reaction 2-[(2R,5Z)-2-carboxy-4-methylthiazol-5(2H)-ylidene]ethyl phosphate + 4-amino-2-methyl-5-(diphosphooxymethyl)pyrimidine + 2 H(+) = thiamine phosphate + CO2 + diphosphate. It carries out the reaction 2-(2-carboxy-4-methylthiazol-5-yl)ethyl phosphate + 4-amino-2-methyl-5-(diphosphooxymethyl)pyrimidine + 2 H(+) = thiamine phosphate + CO2 + diphosphate. The enzyme catalyses 4-methyl-5-(2-phosphooxyethyl)-thiazole + 4-amino-2-methyl-5-(diphosphooxymethyl)pyrimidine + H(+) = thiamine phosphate + diphosphate. It participates in cofactor biosynthesis; thiamine diphosphate biosynthesis; thiamine phosphate from 4-amino-2-methyl-5-diphosphomethylpyrimidine and 4-methyl-5-(2-phosphoethyl)-thiazole: step 1/1. Its function is as follows. Condenses 4-methyl-5-(beta-hydroxyethyl)thiazole monophosphate (THZ-P) and 2-methyl-4-amino-5-hydroxymethyl pyrimidine pyrophosphate (HMP-PP) to form thiamine monophosphate (TMP). This chain is Thiamine-phosphate synthase, found in Agrobacterium fabrum (strain C58 / ATCC 33970) (Agrobacterium tumefaciens (strain C58)).